The following is a 961-amino-acid chain: MRELDPDESNLLLDEQLSIRDVIEQGPFSNVYRILHGPSNRKFLLRSINLNLFRQHTGLGFEEIDEEIRICQNLQHPYICRLEKTINSVHYRHIIFENMEGNDICFEIVQRASNGFVFSEYVVSHYTRQLLDALDYCHTRKIVHRDVRPHNLVLASKDTSAPLKLCGFGVAKDLSEIGGSMACGRVGVPQFMAPEIVRKDRVSCSSDIWSSGVVLFLLLAGRLPFSGSTSDIYERIMQTDVDVDGYMPNISESARNLVRRMLNADPSKRISAKEALNHEWIRDKEHMASRKHMNDVIDQMRRYNESRKLKSNVLSAVNSGRFDETTPRQDTPQTAFVDGSSPGGDCCHRGESSSNDAAEPPADKDLSGAYKVLGSLDAINSLLDPNSYKPGSTTFQKIHDDGSVRNLLRLYDKIKALPCEPVVTEVDTSTLRKETLNQIDGLLGPSPEALELRQLLNSPHLASCVQALDVVVCEIRDPKNEASGSGDKEGNCVSSDPAPAYLNGGVLPLGAQRAGTSFEHFNQSAVHTSYDEEEEELYDCMSRLRLVQFQKDTQEPMGITLKVNEDGRCFVARIMHGGMIHRQATLHVGDEIREINGMSVANRSVESLQEMLRDARGQVTFKIIPSYRSAPPACEIFVRAQFDYEPSQDDLIPCPQAGIPFKTGDILQVISKDDHNWWQARFVSSFPSIGNSSNAQRSNQQQVAGLIPSPELQEWRTACLAMERSKNTCNTHCMWFNKKKKYYTTKYLQKHSALFDQLDLVTYEEVMRLSQYRRKTLVLLGAHGVGRRHIKNTLIHRHPNRFAYPIPHTTRPPRKDEVDGKHYYFVTNEQMMADIQNNEYLEYGTHEESMYGTKLETIRNIHKSGKIAILDVEPQALKVLRTAEYSPFVVFIAAPNLQGMQDPDGSLEKLLNESDVLRQAFGHLFDFIITNSDIDDTIAQLERLVEKLPAYPQWLPVTWVY.

One can recognise a Protein kinase domain in the interval 17–281 (LSIRDVIEQG…AKEALNHEWI (265 aa)). Residues 310 to 320 (KSNVLSAVNSG) form a calmodulin-binding region. Residues 318–366 (NSGRFDETTPRQDTPQTAFVDGSSPGGDCCHRGESSSNDAAEPPADKDL) form a disordered region. 2 consecutive L27 domains span residues 365–422 (DLSG…CEPV) and 428–479 (TSTL…RDPK). The PDZ domain maps to 545–620 (RLVQFQKDTQ…MLRDARGQVT (76 aa)). The 85-residue stretch at 633-717 (ACEIFVRAQF…PSPELQEWRT (85 aa)) folds into the SH3 domain. The Guanylate kinase-like domain maps to 774-946 (RKTLVLLGAH…TIAQLERLVE (173 aa)).

It belongs to the MAGUK family.

May play a structural role in the induction of the vulva. May be required for the localization of signal transduction molecules (such as let-23 receptor) to either the basal membrane domain or the cell junctions. The sequence is that of Protein lin-2 (lin-2) from Caenorhabditis elegans.